Here is a 73-residue protein sequence, read N- to C-terminus: Large ribosomal subunit protein bL31 (73 aa).

This sequence belongs to the bacterial ribosomal protein bL31 family. Type A subfamily. In terms of assembly, part of the 50S ribosomal subunit.

In terms of biological role, binds the 23S rRNA. This is Large ribosomal subunit protein bL31 from Mesorhizobium japonicum (strain LMG 29417 / CECT 9101 / MAFF 303099) (Mesorhizobium loti (strain MAFF 303099)).